Reading from the N-terminus, the 321-residue chain is Ubiquinone biosynthesis protein COQ4, mitochondrial (321 aa).

4 residues coordinate Zn(2+): H205, D206, H209, and E221.

The protein belongs to the COQ4 family. Component of a multi-subunit COQ enzyme complex, composed of at least COQ3, COQ4, COQ5, COQ6, COQ7 and COQ9. It depends on Zn(2+) as a cofactor.

The protein resides in the mitochondrion inner membrane. It carries out the reaction a 4-hydroxy-3-methoxy-5-(all-trans-polyprenyl)benzoate + H(+) = a 2-methoxy-6-(all-trans-polyprenyl)phenol + CO2. It participates in cofactor biosynthesis; ubiquinone biosynthesis. Functionally, lyase that catalyzes the C1-decarboxylation of 4-hydroxy-3-methoxy-5-(all-trans-polyprenyl)benzoic acid into 2-methoxy-6-(all-trans-polyprenyl)phenol during ubiquinone biosynthesis. In Candida tropicalis (strain ATCC MYA-3404 / T1) (Yeast), this protein is Ubiquinone biosynthesis protein COQ4, mitochondrial.